A 448-amino-acid chain; its full sequence is Phosphohexose mutases (448 aa).

Catalysis depends on S97, which acts as the Phosphoserine intermediate. Residues S97, D237, D239, and D241 each coordinate Mg(2+).

Belongs to the phosphohexose mutase family. The cofactor is Mg(2+).

It catalyses the reaction alpha-D-glucose 1-phosphate = alpha-D-glucose 6-phosphate. The catalysed reaction is alpha-D-mannose 1-phosphate = D-mannose 6-phosphate. Its pathway is nucleotide-sugar biosynthesis; GDP-alpha-D-mannose biosynthesis; alpha-D-mannose 1-phosphate from D-fructose 6-phosphate: step 2/2. Involved in xanthan production. This chain is Phosphohexose mutases (xanA), found in Xanthomonas campestris pv. campestris (strain ATCC 33913 / DSM 3586 / NCPPB 528 / LMG 568 / P 25).